The primary structure comprises 906 residues: Protein translocase subunit SecA (906 aa).

Residues glutamine 86, 104-108 (GEGKT), and aspartate 511 each bind ATP. 2 stretches are compositionally biased toward basic and acidic residues: residues 853–865 (HESV…RHDE) and 877–888 (VRREGPKVKRND). The segment at 853-906 (HESVIDNNQRHDEDEQEEAPKVQQVRREGPKVKRNDPCPCGSGKKYKQCHSKVE) is disordered. Residues cysteine 890, cysteine 892, cysteine 901, and histidine 902 each coordinate Zn(2+). Over residues 896–906 (KKYKQCHSKVE) the composition is skewed to basic residues.

Belongs to the SecA family. Monomer and homodimer. Part of the essential Sec protein translocation apparatus which comprises SecA, SecYEG and auxiliary proteins SecDF-YajC and YidC. The cofactor is Zn(2+).

It is found in the cell inner membrane. The protein resides in the cytoplasm. It carries out the reaction ATP + H2O + cellular proteinSide 1 = ADP + phosphate + cellular proteinSide 2.. Part of the Sec protein translocase complex. Interacts with the SecYEG preprotein conducting channel. Has a central role in coupling the hydrolysis of ATP to the transfer of proteins into and across the cell membrane, serving both as a receptor for the preprotein-SecB complex and as an ATP-driven molecular motor driving the stepwise translocation of polypeptide chains across the membrane. In Francisella tularensis subsp. tularensis (strain WY96-3418), this protein is Protein translocase subunit SecA.